We begin with the raw amino-acid sequence, 353 residues long: Trans-enoyl reductase fsa3 (353 aa).

45-48 is a binding site for NADP(+); the sequence is VDTK. 131 to 138 is a substrate binding site; it reads ISFMTTGL. Residues 166-169, 189-192, Tyr-207, and 254-255 contribute to the NADP(+) site; these read SSAT, SPRN, and LE. 275–279 is a substrate binding site; the sequence is GPQML. 344–345 serves as a coordination point for NADP(+); that stretch reads IS.

This sequence belongs to the zinc-containing alcohol dehydrogenase family. In terms of assembly, monomer.

It catalyses the reaction L-serine + 7 malonyl-CoA + acetyl-CoA + 2 S-adenosyl-L-methionine + ATP + 8 NADPH + 11 H(+) = (5S)-3-[(2E,6R,8E,10E,12E)-2,6-dimethyltetradeca-2,8,10,12-tetraenoyl]-5-(hydroxymethyl)pyrrolidine-2,4-dione + AMP + 2 S-adenosyl-L-homocysteine + 7 CO2 + diphosphate + 8 NADP(+) + 8 CoA + 6 H2O. Its pathway is mycotoxin biosynthesis. Functionally, trans-enoyl reductase; part of the gene cluster that mediates the biosynthesis of HIV-1 integrase inhibitor equisetin and of fusarisetin A, both trans-fused decalin-containing tetramic acids showing also antimicrobial activity. The PKS module of fsa1 together with the enoylreductase fsa3 catalyze the formation of the polyketide unit which is then conjugated to L-serine by the condensation domain of the fsa1 NRPS module. Activity of the Dieckmann cyclase domain (RED) results in release of the Dieckmann product intermediate. Diels-Alderase fsa2 is involved in endo-selective Diels-Alder cycloaddition to form the decalin ring, leading to the production of N-desmethylequisetin also called trichosetin. Subsequent N-methylation is carried out by fsa4 to give equisetin. The enzymatic gene responsible for the conversion of equisetin to fusarisetin A has not been identified yet and is probably located outside of the fsa cluster. This is Trans-enoyl reductase fsa3 from Fusarium sp. (strain FN080326).